The chain runs to 489 residues: EGF-like domain-containing protein 2 (489 aa).

The first 23 residues, 1-23, serve as a signal peptide directing secretion; it reads MMQTLLRGLCVVVLFWGYIKASA. The EGF-like domain maps to 73–109; sequence PATLCDPPCLNGGQCFEPTADTYMCMCSEAFYGSQCE. Intrachain disulfides connect cysteine 77/cysteine 87, cysteine 81/cysteine 97, and cysteine 99/cysteine 108. The ZP domain occupies 116–370; sequence ECSGDQITIN…GSCPTPAPPA (255 aa). Asparagine 229 carries an N-linked (GlcNAc...) asparagine glycan. Disordered regions lie at residues 358 to 389 and 404 to 425; these read CEPGSCPTPAPPAPVQPTPSENPGRKRRAASD and RSNEKLRLPHNKSDKKSQQNAD. Positions 363-374 are enriched in pro residues; that stretch reads CPTPAPPAPVQP. Over residues 404–420 the composition is skewed to basic and acidic residues; sequence RSNEKLRLPHNKSDKKS. 2 N-linked (GlcNAc...) asparagine glycosylation sites follow: asparagine 414 and asparagine 479.

In terms of tissue distribution, component of the acid-insoluble organic matrix of calcified layers of the shell (at protein level).

The protein localises to the secreted. This Lottia gigantea (Giant owl limpet) protein is EGF-like domain-containing protein 2.